We begin with the raw amino-acid sequence, 418 residues long: Gamma-glutamyl phosphate reductase (418 aa).

Belongs to the gamma-glutamyl phosphate reductase family.

The protein resides in the cytoplasm. The catalysed reaction is L-glutamate 5-semialdehyde + phosphate + NADP(+) = L-glutamyl 5-phosphate + NADPH + H(+). The protein operates within amino-acid biosynthesis; L-proline biosynthesis; L-glutamate 5-semialdehyde from L-glutamate: step 2/2. Functionally, catalyzes the NADPH-dependent reduction of L-glutamate 5-phosphate into L-glutamate 5-semialdehyde and phosphate. The product spontaneously undergoes cyclization to form 1-pyrroline-5-carboxylate. This chain is Gamma-glutamyl phosphate reductase, found in Agathobacter rectalis (strain ATCC 33656 / DSM 3377 / JCM 17463 / KCTC 5835 / VPI 0990) (Eubacterium rectale).